Reading from the N-terminus, the 309-residue chain is 5-formyl-3-hydroxy-2-methylpyridine 4-carboxylate 5-dehydrogenase (309 aa).

Residues 12 to 13 (TM), D32, 87 to 89 (VPE), and K94 each bind NAD(+).

The protein belongs to the 3-hydroxyacyl-CoA dehydrogenase family. As to quaternary structure, homodimer.

It carries out the reaction 5-formyl-3-hydroxy-2-methylpyridine-4-carboxylate + NAD(+) + H2O = 5-hydroxy-6-methylpyridine-3,4-dicarboxylate + NADH + 2 H(+). The enzyme catalyses 5-formyl-3-hydroxy-2-methylpyridine-4-carboxylate + NADH + H(+) = 4-pyridoxate + NAD(+). Its pathway is cofactor degradation; B6 vitamer degradation. Its function is as follows. Involved in the degradation of pyridoxine (vitamin B(6)). Catalyzes the oxidation of 5-formyl-3-hydroxy-2-methylpyridine-4-carboxylate (FHMPC) by NAD(+) to 5-hydroxy-6-methylpyridine-3,4-dicarboxylate (HMPDC). Can also catalyze the reduction of FHMPC by NADH to 4-pyridoxic acid. The sequence is that of 5-formyl-3-hydroxy-2-methylpyridine 4-carboxylate 5-dehydrogenase from Mesorhizobium japonicum (strain LMG 29417 / CECT 9101 / MAFF 303099) (Mesorhizobium loti (strain MAFF 303099)).